Here is a 232-residue protein sequence, read N- to C-terminus: Ribosomal RNA small subunit methyltransferase G (232 aa).

S-adenosyl-L-methionine-binding positions include Gly-93, Leu-98, 144-145, and Arg-163; that span reads VE.

This sequence belongs to the methyltransferase superfamily. RNA methyltransferase RsmG family.

Its subcellular location is the cytoplasm. It carries out the reaction guanosine(527) in 16S rRNA + S-adenosyl-L-methionine = N(7)-methylguanosine(527) in 16S rRNA + S-adenosyl-L-homocysteine. Functionally, specifically methylates the N7 position of guanine in position 527 of 16S rRNA. This is Ribosomal RNA small subunit methyltransferase G from Burkholderia pseudomallei (strain 1710b).